The following is a 347-amino-acid chain: Dual specificity mitogen-activated protein kinase kinase 3 (347 aa).

Methionine 1 carries the N-acetylmethionine modification. Over residues methionine 1–serine 11 the composition is skewed to pro residues. Residues methionine 1–aspartate 45 are disordered. Serine 3 bears the Phosphoserine mark. One can recognise a Protein kinase domain in the interval leucine 64–phenylalanine 325. ATP is bound by residues leucine 70–valine 78 and lysine 93. Residue aspartate 190 is the Proton acceptor of the active site. Serine 218 bears the Phosphoserine mark. Threonine 222 bears the Phosphothreonine mark.

The protein belongs to the protein kinase superfamily. STE Ser/Thr protein kinase family. MAP kinase kinase subfamily. As to quaternary structure, component of a signaling complex containing at least AKAP13, PKN1, MAPK14, ZAK and MAP2K3. Within this complex, AKAP13 interacts directly with PKN1, which in turn recruits MAPK14, MAP2K3 and ZAK. Binds to DYRK1B/MIRK and increases its kinase activity. Part of a complex with MAP3K3, RAC1 and CCM2. Interacts with ARRB1. Post-translationally, autophosphorylated. Phosphorylation on Ser-218 and Thr-222 by MAP kinase kinase kinases positively regulates the kinase activity. Phosphorylated by TAOK2.

It carries out the reaction L-seryl-[protein] + ATP = O-phospho-L-seryl-[protein] + ADP + H(+). The enzyme catalyses L-threonyl-[protein] + ATP = O-phospho-L-threonyl-[protein] + ADP + H(+). The catalysed reaction is L-tyrosyl-[protein] + ATP = O-phospho-L-tyrosyl-[protein] + ADP + H(+). Activated by dual phosphorylation on Ser-218 and Thr-222. Functionally, dual specificity kinase. Is activated by cytokines and environmental stress in vivo. Catalyzes the concomitant phosphorylation of a threonine and a tyrosine residue in the MAP kinase p38. Part of a signaling cascade that begins with the activation of the adrenergic receptor ADRA1B and leads to the activation of MAPK14. The protein is Dual specificity mitogen-activated protein kinase kinase 3 (Map2k3) of Mus musculus (Mouse).